Reading from the N-terminus, the 695-residue chain is Elongation factor G 2 (695 aa).

The tr-type G domain occupies 5–280 (SKYRNIGIFA…AVVDYLPSPT (276 aa)). GTP-binding positions include 14 to 21 (AHVDAGKT), 78 to 82 (DTPGH), and 132 to 135 (NKLD).

It belongs to the TRAFAC class translation factor GTPase superfamily. Classic translation factor GTPase family. EF-G/EF-2 subfamily.

The protein resides in the cytoplasm. Catalyzes the GTP-dependent ribosomal translocation step during translation elongation. During this step, the ribosome changes from the pre-translocational (PRE) to the post-translocational (POST) state as the newly formed A-site-bound peptidyl-tRNA and P-site-bound deacylated tRNA move to the P and E sites, respectively. Catalyzes the coordinated movement of the two tRNA molecules, the mRNA and conformational changes in the ribosome. The chain is Elongation factor G 2 from Photobacterium profundum (strain SS9).